The primary structure comprises 347 residues: UDP-N-acetylenolpyruvoylglucosamine reductase (347 aa).

The FAD-binding PCMH-type domain maps to 24–195 (FDARARVAAR…VAVTFRLPKA (172 aa)). Residue arginine 171 is part of the active site. Serine 247 functions as the Proton donor in the catalytic mechanism. Residue glutamate 343 is part of the active site.

This sequence belongs to the MurB family. The cofactor is FAD.

It is found in the cytoplasm. The catalysed reaction is UDP-N-acetyl-alpha-D-muramate + NADP(+) = UDP-N-acetyl-3-O-(1-carboxyvinyl)-alpha-D-glucosamine + NADPH + H(+). The protein operates within cell wall biogenesis; peptidoglycan biosynthesis. Functionally, cell wall formation. The polypeptide is UDP-N-acetylenolpyruvoylglucosamine reductase (Burkholderia mallei (strain NCTC 10247)).